Consider the following 914-residue polypeptide: Translation initiation factor IF-2 (914 aa).

Disordered stretches follow at residues 246–271 and 293–313; these read EDGE…KKKG and SGMD…QRRM. A compositionally biased stretch (basic and acidic residues) spans 249–266; the sequence is EAAKKKAAKPDGGEDVGV. Residues 411–581 enclose the tr-type G domain; that stretch reads TRPPVVTIMG…LAEAEIRELK (171 aa). The tract at residues 420 to 427 is G1; that stretch reads GHVDHGKT. Residue 420–427 coordinates GTP; sequence GHVDHGKT. The G2 stretch occupies residues 445–449; that stretch reads GITQH. A G3 region spans residues 467–470; sequence DTPG. GTP-binding positions include 467-471 and 521-524; these read DTPGH and NKID. The tract at residues 521 to 524 is G4; the sequence is NKID. The G5 stretch occupies residues 557 to 559; the sequence is SAK.

The protein belongs to the TRAFAC class translation factor GTPase superfamily. Classic translation factor GTPase family. IF-2 subfamily.

The protein localises to the cytoplasm. Functionally, one of the essential components for the initiation of protein synthesis. Protects formylmethionyl-tRNA from spontaneous hydrolysis and promotes its binding to the 30S ribosomal subunits. Also involved in the hydrolysis of GTP during the formation of the 70S ribosomal complex. The chain is Translation initiation factor IF-2 from Chlorobaculum tepidum (strain ATCC 49652 / DSM 12025 / NBRC 103806 / TLS) (Chlorobium tepidum).